Consider the following 36-residue polypeptide: Photosystem I reaction center subunit VIII (36 aa).

Residues 6–26 traverse the membrane as a helical segment; it reads LPSIFVPLVGLVFPAIAMASL.

The protein belongs to the PsaI family.

The protein resides in the plastid. The protein localises to the chloroplast thylakoid membrane. Functionally, may help in the organization of the PsaL subunit. In Liriodendron tulipifera (Tuliptree), this protein is Photosystem I reaction center subunit VIII.